The following is a 291-amino-acid chain: ATP synthase gamma chain (291 aa).

The protein belongs to the ATPase gamma chain family. In terms of assembly, F-type ATPases have 2 components, CF(1) - the catalytic core - and CF(0) - the membrane proton channel. CF(1) has five subunits: alpha(3), beta(3), gamma(1), delta(1), epsilon(1). CF(0) has three main subunits: a, b and c.

The protein localises to the cell inner membrane. Produces ATP from ADP in the presence of a proton gradient across the membrane. The gamma chain is believed to be important in regulating ATPase activity and the flow of protons through the CF(0) complex. In Rhodopseudomonas palustris (strain ATCC BAA-98 / CGA009), this protein is ATP synthase gamma chain.